Here is a 73-residue protein sequence, read N- to C-terminus: Protein SlyX homolog (73 aa).

It belongs to the SlyX family.

This is Protein SlyX homolog from Histophilus somni (strain 2336) (Haemophilus somnus).